The primary structure comprises 408 residues: Menaquinone reductase (408 aa).

FAD-binding positions include 13 to 17, 46 to 49, Arg-103, Ala-127, Asp-290, and 302 to 303; these read GAGPA, CGDG, and GI.

This sequence belongs to the geranylgeranyl reductase family. It depends on FAD as a cofactor.

The enzyme catalyses menaquinone-9 + AH2 = beta-dihydromenaquinone-9 + A. It participates in quinol/quinone metabolism; menaquinone biosynthesis. Its function is as follows. Catalyzes the reduction of a single double bond in the isoprenoid tail of menaquinone (MK-9) in M.tuberculosis, likely the beta-isoprene unit, forming the predominant form of menaquinone found in mycobacteria, MK-9(II-H2). This chain is Menaquinone reductase, found in Mycobacterium tuberculosis (strain CDC 1551 / Oshkosh).